Consider the following 265-residue polypeptide: MSSDLLCGSHAAPVVTQLRRHAPLVHCITNDVVQNFTANVLLALGASPAMVVDTDEAAQFAAIADALLINLGTLTRPQQQAMRAAIDSACAAGKPWTLDPVAVGALTLRTEFAQEILARRPAAIRANASEIRALTGESGGGRGVDATESAHQAREAARLLARRTGAVVAVTGEVDYITDGERTVAVEGGTAMLTRVVGTGCALSAVVAACCALPGDRLENVATACWLMKRAGEEALTVSRGPGSFASALLDNLHAQAFGGAYETH.

A substrate-binding site is contributed by methionine 50. Residues arginine 125 and threonine 171 each coordinate ATP. Position 198 (glycine 198) interacts with substrate.

The protein belongs to the Thz kinase family. It depends on Mg(2+) as a cofactor.

It carries out the reaction 5-(2-hydroxyethyl)-4-methylthiazole + ATP = 4-methyl-5-(2-phosphooxyethyl)-thiazole + ADP + H(+). It functions in the pathway cofactor biosynthesis; thiamine diphosphate biosynthesis; 4-methyl-5-(2-phosphoethyl)-thiazole from 5-(2-hydroxyethyl)-4-methylthiazole: step 1/1. In terms of biological role, catalyzes the phosphorylation of the hydroxyl group of 4-methyl-5-beta-hydroxyethylthiazole (THZ). The sequence is that of Hydroxyethylthiazole kinase from Cronobacter sakazakii (strain ATCC BAA-894) (Enterobacter sakazakii).